We begin with the raw amino-acid sequence, 148 residues long: UPF0756 membrane protein ETA_17460 (148 aa).

Helical transmembrane passes span 14-34, 51-71, 80-100, and 112-132; these read ALSY…LIVI, MTVG…SGTI, FLHW…WLGG, and VVGG…GVPV.

The protein belongs to the UPF0756 family.

It localises to the cell membrane. The chain is UPF0756 membrane protein ETA_17460 from Erwinia tasmaniensis (strain DSM 17950 / CFBP 7177 / CIP 109463 / NCPPB 4357 / Et1/99).